The following is a 368-amino-acid chain: MSNQHTLLSSNLLPVGSNISTWWNFGSMLLTCLILQTSTGFFLAMHYTANINLAFSSVIHILRDVPYGWIMQNTHAIGASMFFICVYIHIARGLYYGLYLNKEVWLSGTALLITLMATAFFGYVLPWGQMSFWAATVITNLLTAIPYLGTTLTTWLWGGFSINDPTLTRFFALHFILPFLIISLSSIHIILLHNEGSNNPLGTNPDIDKIPFHPYHSYKDMLVLTIMITLLFTIMSFTPNLFNDPENFSKANPLVTPQHIKPEWYFLFAYGILRSIPNKLGGTLALLMSVMILTTTPFTHTSRIRSMTFRPLTQTLFWLLIATFITITWTATKPVEPPFIFISQMASIIYFSFFIINPILGWAENKMQ.

Helical transmembrane passes span 25–45, 69–90, 105–125, and 170–190; these read FGSMLLTCLILQTSTGFFLAM, WIMQNTHAIGASMFFICVYIHI, WLSGTALLITLMATAFFGYVL, and FFALHFILPFLIISLSSIHII. Heme b is bound by residues His75 and His89. The heme b site is built by His174 and His188. His193 is a binding site for a ubiquinone. 4 helical membrane-spanning segments follow: residues 218–238, 280–300, 312–332, and 339–358; these read YKDMLVLTIMITLLFTIMSFT, LGGTLALLMSVMILTTTPFTH, LTQTLFWLLIATFITITWTAT, and FIFISQMASIIYFSFFIINP.

Belongs to the cytochrome b family. The cytochrome bc1 complex contains 3 respiratory subunits (MT-CYB, CYC1 and UQCRFS1), 2 core proteins (UQCRC1 and UQCRC2) and probably 6 low-molecular weight proteins. It depends on heme b as a cofactor.

It localises to the mitochondrion inner membrane. Its function is as follows. Component of the ubiquinol-cytochrome c reductase complex (complex III or cytochrome b-c1 complex) that is part of the mitochondrial respiratory chain. The b-c1 complex mediates electron transfer from ubiquinol to cytochrome c. Contributes to the generation of a proton gradient across the mitochondrial membrane that is then used for ATP synthesis. This chain is Cytochrome b (MT-CYB), found in Notechis ater (Black tiger snake).